Reading from the N-terminus, the 46-residue chain is Large ribosomal subunit protein bL34 (46 aa).

This sequence belongs to the bacterial ribosomal protein bL34 family.

The sequence is that of Large ribosomal subunit protein bL34 from Synechococcus sp. (strain JA-2-3B'a(2-13)) (Cyanobacteria bacterium Yellowstone B-Prime).